A 175-amino-acid chain; its full sequence is ATP synthase subunit b 2 (175 aa).

The helical transmembrane segment at Leu20–Trp40 threads the bilayer.

It belongs to the ATPase B chain family. As to quaternary structure, F-type ATPases have 2 components, F(1) - the catalytic core - and F(0) - the membrane proton channel. F(1) has five subunits: alpha(3), beta(3), gamma(1), delta(1), epsilon(1). F(0) has four main subunits: a(1), b(2) and c(10-14). The alpha and beta chains form an alternating ring which encloses part of the gamma chain. F(1) is attached to F(0) by a central stalk formed by the gamma and epsilon chains, while a peripheral stalk is formed by the delta and b chains.

Its subcellular location is the cell inner membrane. F(1)F(0) ATP synthase produces ATP from ADP in the presence of a proton or sodium gradient. F-type ATPases consist of two structural domains, F(1) containing the extramembraneous catalytic core and F(0) containing the membrane proton channel, linked together by a central stalk and a peripheral stalk. During catalysis, ATP synthesis in the catalytic domain of F(1) is coupled via a rotary mechanism of the central stalk subunits to proton translocation. Its function is as follows. Component of the F(0) channel, it forms part of the peripheral stalk, linking F(1) to F(0). This Prosthecochloris aestuarii (strain DSM 271 / SK 413) protein is ATP synthase subunit b 2.